A 406-amino-acid polypeptide reads, in one-letter code: Tryptophan synthase beta chain (406 aa).

Lys99 is subject to N6-(pyridoxal phosphate)lysine.

Belongs to the TrpB family. Tetramer of two alpha and two beta chains. The cofactor is pyridoxal 5'-phosphate.

It catalyses the reaction (1S,2R)-1-C-(indol-3-yl)glycerol 3-phosphate + L-serine = D-glyceraldehyde 3-phosphate + L-tryptophan + H2O. It functions in the pathway amino-acid biosynthesis; L-tryptophan biosynthesis; L-tryptophan from chorismate: step 5/5. Functionally, the beta subunit is responsible for the synthesis of L-tryptophan from indole and L-serine. This is Tryptophan synthase beta chain from Rhizobium etli (strain CIAT 652).